The chain runs to 110 residues: Large ribosomal subunit protein eL34 (110 aa).

Residues 1–41 (MKNVLIHKGATYKTRSNRRRKVRTPSGKLVNRRVKKHSKKH) form a disordered region. Positions 30 to 41 (VNRRVKKHSKKH) are enriched in basic residues.

This sequence belongs to the eukaryotic ribosomal protein eL34 family.

The chain is Large ribosomal subunit protein eL34 (RPL34) from Encephalitozoon cuniculi (strain GB-M1) (Microsporidian parasite).